Reading from the N-terminus, the 135-residue chain is Small ribosomal subunit protein bS16 (135 aa).

The tract at residues 82–135 (RPAETVGKAKQAAKREADAKQAAKEAAEAKAAAADEKAAEAEASDSAESESTEG) is disordered. Basic and acidic residues predominate over residues 94–121 (AKREADAKQAAKEAAEAKAAAADEKAAE). Acidic residues predominate over residues 123 to 135 (EASDSAESESTEG).

It belongs to the bacterial ribosomal protein bS16 family.

The polypeptide is Small ribosomal subunit protein bS16 (Synechococcus sp. (strain CC9605)).